A 293-amino-acid polypeptide reads, in one-letter code: Protease HtpX (293 aa).

Transmembrane regions (helical) follow at residues Ile-4–Leu-24 and Gly-34–Ser-54. His-139 lines the Zn(2+) pocket. Glu-140 is a catalytic residue. His-143 lines the Zn(2+) pocket. Transmembrane regions (helical) follow at residues Val-158–Met-178 and Leu-193–Ile-213. Glu-222 serves as a coordination point for Zn(2+).

Belongs to the peptidase M48B family. It depends on Zn(2+) as a cofactor.

Its subcellular location is the cell inner membrane. The polypeptide is Protease HtpX (Escherichia coli (strain ATCC 8739 / DSM 1576 / NBRC 3972 / NCIMB 8545 / WDCM 00012 / Crooks)).